The chain runs to 395 residues: Peptide-N(4)-(N-acetyl-beta-glucosaminyl)asparagine amidase (395 aa).

The Zn(2+) site is built by Cys131, Cys134, Cys172, and Cys175. Residue Cys198 is the Nucleophile of the active site. Residues His232 and Asp249 contribute to the active site. Glu252 contacts substrate. Positions 363–395 are disordered; it reads PELTKTTPSTDLPSGRQSGSTEWTKSRGENGES. Polar residues predominate over residues 366-385; that stretch reads TKTTPSTDLPSGRQSGSTEW. Positions 386-395 are enriched in basic and acidic residues; it reads TKSRGENGES.

This sequence belongs to the transglutaminase-like superfamily. PNGase family. The cofactor is Zn(2+).

The protein resides in the cytoplasm. It catalyses the reaction Hydrolysis of an N(4)-(acetyl-beta-D-glucosaminyl)asparagine residue in which the glucosamine residue may be further glycosylated, to yield a (substituted) N-acetyl-beta-D-glucosaminylamine and a peptide containing an aspartate residue.. Functionally, specifically deglycosylates the denatured form of N-linked glycoproteins in the cytoplasm and assists their proteasome-mediated degradation. Cleaves the beta-aspartyl-glucosamine (GlcNAc) of the glycan and the amide side chain of Asn, converting Asn to Asp. Prefers proteins containing high-mannose over those bearing complex type oligosaccharides. Can recognize misfolded proteins in the endoplasmic reticulum that are exported to the cytosol to be destroyed and deglycosylate them, while it has no activity toward native proteins. Deglycosylation is a prerequisite for subsequent proteasome-mediated degradation of some, but not all, misfolded glycoproteins. The chain is Peptide-N(4)-(N-acetyl-beta-glucosaminyl)asparagine amidase (PNG1) from Candida albicans (strain SC5314 / ATCC MYA-2876) (Yeast).